Reading from the N-terminus, the 190-residue chain is CASP-like protein 1E1 (190 aa).

Residues 1–21 are disordered; that stretch reads MEHESKTKMDGIEMEKGKKEN. Residues 1–28 are Cytoplasmic-facing; that stretch reads MEHESKTKMDGIEMEKGKKENGSRKGVE. Residues 29 to 49 form a helical membrane-spanning segment; it reads ITMRVLALVLTMVAATVLGVA. At 50 to 83 the chain is on the extracellular side; the sequence is KQTEVVPIKLIPTLPPLNVATTAKASYLSAFVYN. A helical membrane pass occupies residues 84–104; sequence ICANAIACGYTAISIMIVIIS. The Cytoplasmic portion of the chain corresponds to 105–111; sequence KGRRSKC. The helical transmembrane segment at 112 to 132 threads the bilayer; the sequence is LLMAVLIGDLMMVALLCSSTG. The Extracellular segment spans residues 133-163; the sequence is AAGAIGLMGRHGNKHVMWKKVCGVFGKFCNQ. The chain crosses the membrane as a helical span at residues 164 to 184; it reads AAVSVAITLIASVVFMLLVVL. The Cytoplasmic segment spans residues 185 to 190; sequence DALKLP.

This sequence belongs to the Casparian strip membrane proteins (CASP) family. In terms of assembly, homodimer and heterodimers.

It is found in the cell membrane. The protein is CASP-like protein 1E1 of Arabidopsis lyrata subsp. lyrata (Lyre-leaved rock-cress).